We begin with the raw amino-acid sequence, 957 residues long: Dystrophin-related protein 2 (957 aa).

Spectrin repeat units follow at residues 102–179 and 231–337; these read DHSG…EELE and EHLL…QLQD. The region spanning 358-383 is the WW domain; it reads WERAISPNKVPYYINHQAQTTCWDHP. Residues 605–661 form a ZZ-type; degenerate zinc finger; the sequence is KHQTKCSICRQCPIKGFRYRSLKQFNVDICQTCFLTGKASKGNKLHYPIMEYYTPTT. The Zn(2+) site is built by Cys-610, Cys-613, Cys-634, and Cys-637. Ser-748 bears the Phosphoserine mark. The span at 877–894 shows a compositional bias: low complexity; sequence PPTESDGNGSAGSSLASS. The tract at residues 877–923 is disordered; the sequence is PPTESDGNGSAGSSLASSPRQSEGSHPREKGQTTPDTEAADDVGSKS. At Thr-910 the chain carries Phosphothreonine.

As to quaternary structure, interacts with PRX; this enhances phosphorylation. Identified in a dystroglycan complex that contains at least PRX, DRP2, UTRN, DMD and DAG1. Detected in trigeminal nerve Schwann cells. Detected in brain cortex and hippocampus. Detected in brain membrane fractions and highly enriched in the postsynaptic density (at protein level).

It is found in the postsynaptic density. It localises to the cell projection. The protein resides in the dendrite. The protein localises to the perikaryon. Its subcellular location is the cell membrane. In terms of biological role, required for normal myelination and for normal organization of the cytoplasm and the formation of Cajal bands in myelinating Schwann cells. Required for normal PRX location at appositions between the abaxonal surface of the myelin sheath and the Schwann cell plasma membrane. Possibly involved in membrane-cytoskeleton interactions of the central nervous system. This Rattus norvegicus (Rat) protein is Dystrophin-related protein 2 (Drp2).